We begin with the raw amino-acid sequence, 330 residues long: Cyclin-dependent kinase 7 (330 aa).

Residues 5-289 (YDTIKHLGEG…CTQSLQMEYF (285 aa)) enclose the Protein kinase domain. ATP is bound by residues 11 to 19 (LGEGQFANV) and Lys34. The active-site Proton acceptor is Asp130. Position 163 is a phosphothreonine (Thr163). The tract at residues 305–330 (KKQQPQKRSRRLDDDGTRPVRRLNFD) is disordered. Residues 315-330 (RLDDDGTRPVRRLNFD) are compositionally biased toward basic and acidic residues.

Belongs to the protein kinase superfamily. CMGC Ser/Thr protein kinase family. CDC2/CDKX subfamily. Catalytic component which, in association with cyclin H (cyh-1) and mat1, is likely to form the CAK complex.

The enzyme catalyses L-seryl-[protein] + ATP = O-phospho-L-seryl-[protein] + ADP + H(+). It carries out the reaction L-threonyl-[protein] + ATP = O-phospho-L-threonyl-[protein] + ADP + H(+). It catalyses the reaction [DNA-directed RNA polymerase] + ATP = phospho-[DNA-directed RNA polymerase] + ADP + H(+). Its function is as follows. Serine/threonine kinase involved in cell cycle control and in RNA polymerase II-mediated RNA transcription. Required for maintaining chromosome ploidy. May phosphorylate the large subunit of RNA polymerase II, ama-1. This chain is Cyclin-dependent kinase 7, found in Caenorhabditis elegans.